We begin with the raw amino-acid sequence, 142 residues long: MIRCTDINEITPFSSFISKIPNHCGTHMDASRHFVKDGLSINELPIGYFCHKDVVLLEVPKGEAEGITKEDLEPYAAILAQVSFAFLCTGFEKYRTENPLIYQNEGPYIATSAGKYLSDNYPNLKGVGIWFPCTWFAVFSCT.

Residues 75–91 (YAAILAQVSFAFLCTGF) form a helical membrane-spanning segment.

The protein resides in the membrane. This is an uncharacterized protein from Haemophilus influenzae (strain ATCC 51907 / DSM 11121 / KW20 / Rd).